A 144-amino-acid chain; its full sequence is Large ribosomal subunit protein uL15 (144 aa).

The segment at 1 to 58 is disordered; sequence MQLNDLRSAPGARREKLRPGRGIGSGLGKTGGRGHKGQTSRSGGKIAPGFEGGQQPLH. The span at 21 to 31 shows a compositional bias: gly residues; sequence RGIGSGLGKTG.

The protein belongs to the universal ribosomal protein uL15 family. As to quaternary structure, part of the 50S ribosomal subunit.

Binds to the 23S rRNA. The chain is Large ribosomal subunit protein uL15 from Azotobacter vinelandii (strain DJ / ATCC BAA-1303).